The following is a 257-amino-acid chain: tRNA (guanine-N(7)-)-methyltransferase (257 aa).

Positions 1–42 are disordered; sequence MTVVVSDHQNPRPPGDDAAPLGRTGNRDRPPGSFFGRRKGHR. S-adenosyl-L-methionine is bound by residues Glu84, Glu109, Asp136, and Asp158. The active site involves Asp158. Positions 162 and 194 each coordinate substrate.

It belongs to the class I-like SAM-binding methyltransferase superfamily. TrmB family.

It catalyses the reaction guanosine(46) in tRNA + S-adenosyl-L-methionine = N(7)-methylguanosine(46) in tRNA + S-adenosyl-L-homocysteine. It participates in tRNA modification; N(7)-methylguanine-tRNA biosynthesis. In terms of biological role, catalyzes the formation of N(7)-methylguanine at position 46 (m7G46) in tRNA. The chain is tRNA (guanine-N(7)-)-methyltransferase from Nitrobacter winogradskyi (strain ATCC 25391 / DSM 10237 / CIP 104748 / NCIMB 11846 / Nb-255).